Here is a 1126-residue protein sequence, read N- to C-terminus: Formin-B (1126 aa).

A disordered region spans residues 1 to 21 (MFFKGKKKDKEKEKSHGNIGN). The GBD/FH3 domain occupies 38–406 (EQNLSNEDLK…LILKDPSKES (369 aa)). Over residues 427–447 (LNNSNNNNNNNNSNNNNNDSN) the composition is skewed to low complexity. Positions 427 to 462 (LNNSNNNNNNNNSNNNNNDSNVSTPNINTGSPLLPP) are disordered. Residues 448-462 (VSTPNINTGSPLLPP) are compositionally biased toward polar residues. Positions 463–514 (QQYQDLEQKLQLTQNEKNESQNKVKQLESEIKGLNSTLTGLQLKVTKLEADL) form a coiled coil. Over residues 518-532 (SVTTPPSDTNGTTSP) the composition is skewed to polar residues. 2 disordered regions span residues 518 to 619 (SVTT…SVPS) and 1004 to 1078 (ARKK…QNGT). The FH1 domain occupies 527 to 611 (NGTTSPPIEA…PGAPAVPNLP (85 aa)). Positions 543–597 (GAPPPPPPPPPAPPVSGGGPPPPPPPPPPSSGGGPPPPPPPPSSGGPPPPPPPPG) are enriched in pro residues. Low complexity-rich tracts occupy residues 598-607 (GMKKPGAPAV), 1009-1022 (AASG…SGSS), and 1032-1064 (SPIT…QQQQ). The region spanning 612–1011 (PKKSSVPSVK…LAARKKAAAS (400 aa)) is the FH2 domain. Residues 980 to 1010 (KFKNEFKRTIESIQKERENVQKLAARKKAAA) adopt a coiled-coil conformation. The region spanning 1071–1100 (DDIPQNGTFMDQLMSKMKGGEAIRASRRAS) is the DAD domain.

This sequence belongs to the formin homology family. Diaphanous subfamily. As to quaternary structure, interacts (via GBD/FH3 domain) with activated Rho-GTPases. Interacts with pfyA and pfyB.

Functionally, formins play an important role in the nucleation of actin and the formation of linear actin filaments. The polypeptide is Formin-B (forB) (Dictyostelium discoideum (Social amoeba)).